The sequence spans 46 residues: Escargot/snail protein homolog (46 aa).

C2H2-type zinc fingers lie at residues 1–4, 9–30, and 36–46; these read HIAH, CKCPICGKPFAPWLLQGHIRTH, and SVCQHCNRAFA.

It belongs to the snail C2H2-type zinc-finger protein family.

It is found in the nucleus. The protein is Escargot/snail protein homolog of Lithobius forficatus (Centipede).